We begin with the raw amino-acid sequence, 551 residues long: MSFDGFFLHHIVEELRSELVNGRIQKINQPFEQELVLQIRSNRQSHRLLLSAHPVFGRIQLTQTTFENPAQPSTFIMVLRKYLQGALIESIEQVENDRIVEMTVSNKNEIGDHIQATLIIEIMGKHSNILLVDKSSHKILEVIKHVGFSQNSYRTLLPGSTYIAPPSTESLNPFTIKDEKLFEILQTQELTAKNLQSLFQGLGRDTANELERILVSEKLSAFRNFFNQETKPCLTETSFSPVPFANQAGEPFANLSDLLDTYYKNKAERDRVKQQASELIRRVENELQKNRHKLKKQERELLATDNAEEFRQKGELLTTFLHQVPNDQDQVILDNYYTNQPIMIALDKALTPNQNAQRYFKRYQKLKEAVKYLTDLIEETKATILYLESVETVLNQAGLEEIAEIREELIQTGFIRRRQREKIQKRKKLEQYLASDGKTIIYVGRNNLQNEELTFKMARKEELWFHAKDIPGSHVVISGNLDPSDAVKTDAAELAAYFSQGRLSNLVQVDMIEVKKLNKPTGGKPGFVTYTGQKTLRVTPDSKKIASMKKS.

Residues 363-551 form a required for fibronectin binding region; that stretch reads YQKLKEAVKY…SKKIASMKKS (189 aa).

Belongs to the NEMF family. In terms of assembly, associates with stalled 50S ribosomal subunits, binds to RqcP. Interacts with human fibronectin.

It is found in the cell surface. The protein resides in the cytoplasm. Its function is as follows. Key component of the ribosome quality control system (RQC), a ribosome-associated complex that mediates the extraction of incompletely synthesized nascent chains from stalled ribosomes and their subsequent degradation. RqcH recruits Ala-charged tRNA, and with RqcP directs the elongation of stalled nascent chains on 50S ribosomal subunits, leading to non-templated C-terminal alanine extensions (Ala tail). The Ala tail promotes nascent chain degradation. May add between 1 and at least 8 Ala residues. Binds to stalled 50S ribosomal subunits. Functionally, recombinant protein binds to immobilized human fibronectin; binding is saturable and competed by heparin. Recombinant protein inhibits binding of whole cells to fibronectin. This chain is Rqc2 homolog RqcH, found in Streptococcus pneumoniae (strain ATCC BAA-255 / R6).